Here is a 254-residue protein sequence, read N- to C-terminus: Phosphoribosylaminoimidazole-succinocarboxamide synthase (254 aa).

The protein belongs to the SAICAR synthetase family.

The catalysed reaction is 5-amino-1-(5-phospho-D-ribosyl)imidazole-4-carboxylate + L-aspartate + ATP = (2S)-2-[5-amino-1-(5-phospho-beta-D-ribosyl)imidazole-4-carboxamido]succinate + ADP + phosphate + 2 H(+). It participates in purine metabolism; IMP biosynthesis via de novo pathway; 5-amino-1-(5-phospho-D-ribosyl)imidazole-4-carboxamide from 5-amino-1-(5-phospho-D-ribosyl)imidazole-4-carboxylate: step 1/2. The chain is Phosphoribosylaminoimidazole-succinocarboxamide synthase from Sinorhizobium medicae (strain WSM419) (Ensifer medicae).